Consider the following 877-residue polypeptide: DNA mismatch repair protein MutS (877 aa).

627–634 (GPNMAGKS) is an ATP binding site.

The protein belongs to the DNA mismatch repair MutS family.

This protein is involved in the repair of mismatches in DNA. It is possible that it carries out the mismatch recognition step. This protein has a weak ATPase activity. The polypeptide is DNA mismatch repair protein MutS (Dinoroseobacter shibae (strain DSM 16493 / NCIMB 14021 / DFL 12)).